We begin with the raw amino-acid sequence, 686 residues long: 3',5'-cyclic-AMP phosphodiesterase 4C (686 aa).

Phosphoserine is present on residues Ser-9, Ser-28, Ser-40, and Ser-83. Disordered stretches follow at residues 88-116 (NGLP…VHHV) and 124-143 (YRSD…TSSA). A compositionally biased stretch (basic and acidic residues) spans 124–133 (YRSDSDHEPS). Positions 313–642 (VQTDQEEQLA…EWYQSRIPCS (330 aa)) constitute a PDEase domain. His-389 serves as the catalytic Proton donor. His-389 is a 3',5'-cyclic AMP binding site. AMP contacts are provided by His-389 and His-393. The Zn(2+) site is built by His-393, His-429, Asp-430, and Asp-547. The AMP site is built by Asp-430, Asp-547, Gln-598, and Phe-601. Asp-430 serves as a coordination point for Mg(2+). Asp-430 is a Mn(2+) binding site. 3',5'-cyclic AMP contacts are provided by Gln-598 and Phe-601. Ser-642 bears the Phosphoserine mark. A compositionally biased stretch (acidic residues) spans 660-671 (EAEEEEEEEDEG). Residues 660–686 (EAEEEEEEEDEGQCTALNRESSELPST) are disordered. Polar residues predominate over residues 674 to 686 (TALNRESSELPST).

The protein belongs to the cyclic nucleotide phosphodiesterase family. PDE4 subfamily. In terms of assembly, part of a complex containing AKAP5, ADCY5, ADCY6 and PKD2. Requires Zn(2+) as cofactor. Mg(2+) serves as cofactor. Mn(2+) is required as a cofactor.

It is found in the cell projection. It localises to the cilium. It carries out the reaction 3',5'-cyclic AMP + H2O = AMP + H(+). The protein operates within purine metabolism; 3',5'-cyclic AMP degradation; AMP from 3',5'-cyclic AMP: step 1/1. In terms of biological role, hydrolyzes the second messenger cAMP, which is a key regulator of many important physiological processes. The protein is 3',5'-cyclic-AMP phosphodiesterase 4C of Mus musculus (Mouse).